A 992-amino-acid polypeptide reads, in one-letter code: ATP-dependent DNA helicase PIF7 (992 aa).

The N-terminal 21 residues, 1–21 (MWDGPLRSRQNLRTVAKLRSS), are a transit peptide targeting the mitochondrion. 3 disordered regions span residues 20–43 (SSGC…GETA), 145–182 (TVNK…TAAS), and 190–209 (LDSS…AVTQ). Composition is skewed to polar residues over residues 23–43 (CPLT…GETA), 173–182 (NVDNTTTAAS), and 191–208 (DSSS…QAVT). 237 to 244 (GGAGTGKS) serves as a coordination point for ATP. Residues 651–670 (QAYVALSRCTDVANLVIENF) mediate DNA binding.

This sequence belongs to the helicase family. PIF1 subfamily. As to quaternary structure, monomer. Requires Mg(2+) as cofactor.

The protein localises to the mitochondrion matrix. Its subcellular location is the kinetoplast. The catalysed reaction is Couples ATP hydrolysis with the unwinding of duplex DNA at the replication fork by translocating in the 5'-3' direction. This creates two antiparallel DNA single strands (ssDNA). The leading ssDNA polymer is the template for DNA polymerase III holoenzyme which synthesizes a continuous strand.. It carries out the reaction ATP + H2O = ADP + phosphate + H(+). In terms of biological role, DNA-dependent ATPase and 5'-3' DNA helicase required for the maintenance of mitochondrial (kinetoplast) genome stability. The sequence is that of ATP-dependent DNA helicase PIF7 from Trypanosoma brucei brucei (strain 927/4 GUTat10.1).